A 1126-amino-acid polypeptide reads, in one-letter code: [F-actin]-monooxygenase mical2 (1126 aa).

The monooxygenase domain stretch occupies residues 2–494; sequence GENGDDKHGR…KHLFITNELQ (493 aa). FAD is bound by residues cysteine 97, 116-118, 123-125, phenylalanine 183, tyrosine 299, and aspartate 399; these read EKR and RNN. The 104-residue stretch at 516–619 folds into the Calponin-homology (CH) domain; that stretch reads DVRPNKLLIW…MVLYLSKFYE (104 aa). Residues 659–680 carry the Nuclear localization signal motif; it reads RKRVPKDEKTSDDSDLNKRRKT. Disordered stretches follow at residues 748-830 and 892-935; these read AVTA…SLSS and PSLG…SGMS. The span at 792 to 803 shows a compositional bias: pro residues; the sequence is VRPPVQPRPGPA. Residues 805-824 are compositionally biased toward basic and acidic residues; it reads PTRELRVVERAQSHPDDLGR. Positions 918–932 are enriched in low complexity; it reads SSSDSSPSSAPSRKS. Residues 1001 to 1063 enclose the LIM zinc-binding domain; that stretch reads DTCYFCKRRV…QPHFMHSVTK (63 aa). Zn(2+) is bound by residues cysteine 1003, cysteine 1006, histidine 1024, cysteine 1027, cysteine 1030, cysteine 1033, cysteine 1053, and histidine 1056.

The protein belongs to the Mical family. FAD serves as cofactor.

Its subcellular location is the nucleus. The protein resides in the cytoplasm. It carries out the reaction L-methionyl-[F-actin] + NADPH + O2 + H(+) = L-methionyl-(R)-S-oxide-[F-actin] + NADP(+) + H2O. Its function is as follows. Nuclear monooxygenase that promotes depolymerization of F-actin by mediating oxidation of specific methionine residues on actin and regulates the srf signaling. Acts by modifying nuclear actin subunits through the addition of oxygen to form methionine-sulfoxide, leading to promote actin filament severing and prevent repolymerization. Acts as a key regulator of the srf signaling pathway elicited by nerve growth factor and serum: mediates oxidation and subsequent depolymerization of nuclear actin, leading to increase mkl1/mrtf-a presence in the nucleus and promote srf:mkl1/mrtf-a-dependent gene transcription. The sequence is that of [F-actin]-monooxygenase mical2 from Xenopus tropicalis (Western clawed frog).